A 673-amino-acid chain; its full sequence is DNA ligase (673 aa).

Residues 34-38, 83-84, and E116 contribute to the NAD(+) site; these read DAEYD and SL. K118 acts as the N6-AMP-lysine intermediate in catalysis. The NAD(+) site is built by R139, E176, K293, and K317. Positions 411, 414, 429, and 435 each coordinate Zn(2+). In terms of domain architecture, BRCT spans 595-673; sequence NQQNPFFGKT…EDEFLKWVNS (79 aa).

Belongs to the NAD-dependent DNA ligase family. LigA subfamily. Mg(2+) is required as a cofactor. Requires Mn(2+) as cofactor.

It carries out the reaction NAD(+) + (deoxyribonucleotide)n-3'-hydroxyl + 5'-phospho-(deoxyribonucleotide)m = (deoxyribonucleotide)n+m + AMP + beta-nicotinamide D-nucleotide.. DNA ligase that catalyzes the formation of phosphodiester linkages between 5'-phosphoryl and 3'-hydroxyl groups in double-stranded DNA using NAD as a coenzyme and as the energy source for the reaction. It is essential for DNA replication and repair of damaged DNA. The protein is DNA ligase of Legionella pneumophila (strain Lens).